The primary structure comprises 274 residues: Bis(5'-nucleosyl)-tetraphosphatase, symmetrical (274 aa).

This sequence belongs to the Ap4A hydrolase family.

The enzyme catalyses P(1),P(4)-bis(5'-adenosyl) tetraphosphate + H2O = 2 ADP + 2 H(+). Functionally, hydrolyzes diadenosine 5',5'''-P1,P4-tetraphosphate to yield ADP. The sequence is that of Bis(5'-nucleosyl)-tetraphosphatase, symmetrical from Shewanella oneidensis (strain ATCC 700550 / JCM 31522 / CIP 106686 / LMG 19005 / NCIMB 14063 / MR-1).